Here is a 475-residue protein sequence, read N- to C-terminus: Ankyrin repeat, SAM and basic leucine zipper domain-containing protein 1 (475 aa).

Positions 1–10 (MAAGRLRGLA) are enriched in low complexity. The tract at residues 1-24 (MAAGRLRGLAVAGGGESSESDDDG) is disordered. S17, S18, and S20 each carry phosphoserine. ANK repeat units lie at residues 45–74 (EKNE…SVDS), 78–107 (YGWT…NANF), 110–144 (DKQT…DPNV), 148–177 (RLMT…EVNT), 181–210 (SGYT…DKML), and 214–243 (DGNI…PLKG). Residues 272 to 334 (SYTAFGDLEV…KILAALKELD (63 aa)) enclose the SAM domain.

In terms of assembly, interacts with DDX4, PIWIL1, RANBP9 and TDRD1.

The protein resides in the cytoplasm. Plays a central role during spermatogenesis by repressing transposable elements and preventing their mobilization, which is essential for the germline integrity. Acts via the piRNA metabolic process, which mediates the repression of transposable elements during meiosis by forming complexes composed of piRNAs and Piwi proteins and governs the methylation and subsequent repression of transposons. Its association with pi-bodies suggests a participation in the primary piRNAs metabolic process. Required prior to the pachytene stage to facilitate the production of multiple types of piRNAs, including those associated with repeats involved in the regulation of retrotransposons. May act by mediating protein-protein interactions during germ cell maturation. This Carollia perspicillata (Seba's short-tailed bat) protein is Ankyrin repeat, SAM and basic leucine zipper domain-containing protein 1 (ASZ1).